The sequence spans 287 residues: Glycine--tRNA ligase alpha subunit (287 aa).

This sequence belongs to the class-II aminoacyl-tRNA synthetase family. In terms of assembly, tetramer of two alpha and two beta subunits.

The protein resides in the cytoplasm. The enzyme catalyses tRNA(Gly) + glycine + ATP = glycyl-tRNA(Gly) + AMP + diphosphate. The polypeptide is Glycine--tRNA ligase alpha subunit (Campylobacter curvus (strain 525.92)).